A 730-amino-acid chain; its full sequence is Actin filament-associated protein 1 (730 aa).

Methionine 1 carries the post-translational modification N-acetylmethionine. The disordered stretch occupies residues 47-91 (KDHAQKQETANSLPAPPQMPLPEIPQPWLPPDSGPPPLPTSSLPE). The span at 60-85 (PAPPQMPLPEIPQPWLPPDSGPPPLP) shows a compositional bias: pro residues. The SH3-binding motif lies at 71 to 74 (PQPW). Positions 94–97 (YEEA) match the SH2-binding 1 motif. The segment at 119-140 (SSSYESYDEEEEDGKGKKTRHQ) is disordered. Positions 153–249 (DAKICAFLLR…WLKVIKEAYS (97 aa)) constitute a PH 1 domain. The disordered stretch occupies residues 252-292 (SGPVDSECPPPPSSPVHKAELEKKLSSERPSSDGEGVVENG). Positions 268–283 (HKAELEKKLSSERPSS) are enriched in basic and acidic residues. Residues serine 282 and serine 283 each carry the phosphoserine modification. A PH 2 domain is found at 347-441 (DVPTCGYLNV…WIGILLAETG (95 aa)). An SH2-binding 2 motif is present at residues 451–456 (YDYIDV). The segment at 512–537 (KGKKPPVASNGVTGKGKTLSSQPKKA) is disordered. Residue serine 548 is modified to Phosphoserine. The stretch at 557-648 (KNRVEADAKR…VKESLKKALA (92 aa)) forms a coiled coil. The tract at residues 594-637 (DLRAAIEVNAGRKPQAILEEKLKQLEEECRQKEAERVSLELELT) is interaction with F-actin. Residues serine 664, serine 665, and serine 668 each carry the phosphoserine modification. The residue at position 675 (threonine 675) is a Phosphothreonine. Serine 679 and serine 687 each carry phosphoserine.

In terms of assembly, monomer and homomultimer. Interacts via its C-terminus with F-actin; probably involving AFAP1 multimers. Interacts with activated SRC SH3-SH2 domains. Interacts via its PH 1 domain with PRKCA, PRKCB and PRKCI. Post-translationally, phosphorylated on tyrosine residues by SRC. Low expression in normal breast epithelial cell line MCF-10A and in tumorigenic breast cancer cell lines MCF-7, T-47D and ZR-75-1. Highly expressed in the invasive breast cancer cell lines MDA-MB-231 and MDA-MB-435. Overexpressed in prostate carcinoma.

Its subcellular location is the cytoplasm. The protein resides in the cytoskeleton. It is found in the stress fiber. Can cross-link actin filaments into both network and bundle structures. May modulate changes in actin filament integrity and induce lamellipodia formation. May function as an adapter molecule that links other proteins, such as SRC and PKC to the actin cytoskeleton. Seems to play a role in the development and progression of prostate adenocarcinoma by regulating cell-matrix adhesions and migration in the cancer cells. The chain is Actin filament-associated protein 1 (AFAP1) from Homo sapiens (Human).